The primary structure comprises 210 residues: Translation initiation factor IF-3 (210 aa).

Residues 169-210 are disordered; that stretch reads APKQAPAPKKERTEESAEKAGSAGETEPVPAASAAAEAPANV. Residues 176-186 are compositionally biased toward basic and acidic residues; it reads PKKERTEESAE. Residues 187–210 are compositionally biased toward low complexity; sequence KAGSAGETEPVPAASAAAEAPANV.

This sequence belongs to the IF-3 family. Monomer.

Its subcellular location is the cytoplasm. Its function is as follows. IF-3 binds to the 30S ribosomal subunit and shifts the equilibrium between 70S ribosomes and their 50S and 30S subunits in favor of the free subunits, thus enhancing the availability of 30S subunits on which protein synthesis initiation begins. This is Translation initiation factor IF-3 from Deinococcus deserti (strain DSM 17065 / CIP 109153 / LMG 22923 / VCD115).